Here is a 204-residue protein sequence, read N- to C-terminus: Pneumococcal vaccine antigen A (204 aa).

The protein localises to the cell surface. The polypeptide is Pneumococcal vaccine antigen A (pvaA) (Streptococcus pneumoniae serotype 4 (strain ATCC BAA-334 / TIGR4)).